A 335-amino-acid polypeptide reads, in one-letter code: Tetraacyldisaccharide 4'-kinase (335 aa).

51 to 58 is a binding site for ATP; the sequence is HVGGAGKT.

Belongs to the LpxK family.

It catalyses the reaction a lipid A disaccharide + ATP = a lipid IVA + ADP + H(+). It participates in glycolipid biosynthesis; lipid IV(A) biosynthesis; lipid IV(A) from (3R)-3-hydroxytetradecanoyl-[acyl-carrier-protein] and UDP-N-acetyl-alpha-D-glucosamine: step 6/6. Its function is as follows. Transfers the gamma-phosphate of ATP to the 4'-position of a tetraacyldisaccharide 1-phosphate intermediate (termed DS-1-P) to form tetraacyldisaccharide 1,4'-bis-phosphate (lipid IVA). The chain is Tetraacyldisaccharide 4'-kinase from Bradyrhizobium sp. (strain ORS 278).